A 658-amino-acid chain; its full sequence is MSCSISLSFPDGSKRNYPAEMTGLELAESISKSLAKKAVAYSLDGITRDLSDSLGQSGQVEIITREDSRALELIRHDCAHVLAEAVQELFPETQVTIGPVIENGFYYDFARQQPFTLDDLTIIEKKMREIIQRNKPFRKEIWSREKARRVFSEKKEFYKVELINSIPDNQDLKIYYQGEWFDLCRGPHMQSTGQIGNAFKLMKVAGAYWRGDANNPMLTRIYGTAFANENDLKAYLHMLEEAEKRDHRRLGREMDLFHFQEEGPGMIFWHQKGWKMFQNLINYMRRRLDDHQYAEVNAPQVLDRSLWEISGHWGWYKENMFKAIPAAEDLDHEHIYALKPMNCPGHVQIFKHGLKSYRDLPIRLAEFGLVHRYEPSGSLHGLMRVRSFTQDDAHIFCTDEQLAAECLSINDLILSTYADFGFKEISLKLSTRPEKRVGSDALWDHAESIMESVLKTIETKFAGQIKTSILPGEGAFYGPKFEYTLKDAIGREWQCGTTQLDFNLPERFGAFYIDKDSEKRQPVMIHRAIFGSMERFLGILIENFAGHMPLWLAPEQIVVATITSEANEYAQKITARLKAVGLSATTDLRNEKINYKIREHSLQKVPVILVCGKREAETNSVNMRRLGSPNQTLLSVEDAIKQLSNESTPPDLQRVINA.

Positions 1–64 constitute a TGS domain; it reads MSCSISLSFP…GQSGQVEIIT (64 aa). The tract at residues 246-549 is catalytic; sequence DHRRLGREMD…LIENFAGHMP (304 aa). Zn(2+) is bound by residues Cys-343, His-394, and His-526.

The protein belongs to the class-II aminoacyl-tRNA synthetase family. In terms of assembly, homodimer. Requires Zn(2+) as cofactor.

The protein resides in the cytoplasm. The enzyme catalyses tRNA(Thr) + L-threonine + ATP = L-threonyl-tRNA(Thr) + AMP + diphosphate + H(+). In terms of biological role, catalyzes the attachment of threonine to tRNA(Thr) in a two-step reaction: L-threonine is first activated by ATP to form Thr-AMP and then transferred to the acceptor end of tRNA(Thr). Also edits incorrectly charged L-seryl-tRNA(Thr). This Bartonella tribocorum (strain CIP 105476 / IBS 506) protein is Threonine--tRNA ligase.